We begin with the raw amino-acid sequence, 449 residues long: Gamma-aminobutyric acid receptor subunit delta (449 aa).

Residues 1-24 (MDVLGWLLLPLLLLCTQPHHGARA) form the signal peptide. At 25–251 (MNDIGDYVGS…QLRRNRGVYI (227 aa)) the chain is on the extracellular side. N-linked (GlcNAc...) asparagine glycosylation is found at Asn-103 and Asn-106. A disulfide bridge connects residues Cys-164 and Cys-178. A helical transmembrane segment spans residues 252–271 (IQSYMPSVLLVAMSWVSFWI). Topologically, residues 272–275 (SQAA) are cytoplasmic. The helical transmembrane segment at 276–298 (VPARVSLGITTVLTMTTLMVSAR) threads the bilayer. Residues 299–308 (SSLPRASAIK) lie on the Extracellular side of the membrane. The chain crosses the membrane as a helical span at residues 309-331 (ALDVYFWICYVFVFAALVEYAFA). Residues 332–423 (HFNADYRKKR…SRLKPIDADT (92 aa)) lie on the Cytoplasmic side of the membrane. Ser-390 carries the post-translational modification Phosphoserine. Residues 424 to 446 (IDIYARAVFPAAFAAVNIIYWAA) traverse the membrane as a helical segment. The Extracellular portion of the chain corresponds to 447-449 (YTM).

Belongs to the ligand-gated ion channel (TC 1.A.9) family. Gamma-aminobutyric acid receptor (TC 1.A.9.5) subfamily. GABRD sub-subfamily. In terms of assembly, heteropentamer, formed by a combination of alpha (GABRA1-6), beta (GABRB1-3), gamma (GABRG1-3), delta (GABRD), epsilon (GABRE), rho (GABRR1-3), pi (GABRP) and theta (GABRQ) chains, each subunit exhibiting distinct physiological and pharmacological properties. As to expression, found in the brain, in cerebellar granule cells. Expressed in lungs, in alveolar epithelium.

The protein localises to the cell membrane. It carries out the reaction chloride(in) = chloride(out). Delta subunit of the heteropentameric ligand-gated chloride channel gated by gamma-aminobutyric acid (GABA), a major inhibitory neurotransmitter in the brain. GABA-gated chloride channels, also named GABA(A) receptors (GABAAR), consist of five subunits arranged around a central pore and contain GABA active binding site(s) located at the alpha and beta subunit interface(s). When activated by GABA, GABAARs selectively allow the flow of chloride anions across the cell membrane down their electrochemical gradient. GABAARs containing delta/GABRD subunits are predominantly expressed and located in extrasynaptic or perisynaptic positions on hippocampus and cerebellar granule cells, and contribute to the tonic GABAergic inhibition. GABAAR containing alpha-4-beta-3-delta subunits can simultaneously bind GABA and histamine where histamine binds at the interface of two neighboring beta subunits, which may be involved in the regulation of sleep and wakefulness. The polypeptide is Gamma-aminobutyric acid receptor subunit delta (Rattus norvegicus (Rat)).